A 634-amino-acid chain; its full sequence is Growth hormone receptor (634 aa).

The signal sequence occupies residues 1–18 (MDLWQLLLTLAVAGSSDA). Over 19–260 (FSGSEATPAF…NPSACEEDFQ (242 aa)) the chain is Extracellular. Residue Asn46 is glycosylated (N-linked (GlcNAc...) asparagine). A disulfide bridge connects residues Cys56 and Cys66. Asn73 carries N-linked (GlcNAc...) asparagine glycosylation. An intrachain disulfide couples Cys97 to Cys108. Residue Asn111 is glycosylated (N-linked (GlcNAc...) asparagine). An intrachain disulfide couples Cys122 to Cys136. The 104-residue stretch at 147–250 (PPVGLNWTLL…EVLLITFPQM (104 aa)) folds into the Fibronectin type-III domain. N-linked (GlcNAc...) asparagine glycans are attached at residues Asn152, Asn157, and Asn196. Residues 236–240 (YGKFS) carry the WSXWS motif motif. The helical transmembrane segment at 261–284 (FPWFLIIIFGILGLTVTLFLLIFS) threads the bilayer. Residues 285 to 634 (KQQRIKMLIL…STDQLNKIMP (350 aa)) lie on the Cytoplasmic side of the membrane. The tract at residues 290-375 (KMLILPPVPV…HEKSLSIFGA (86 aa)) is required for JAK2 binding. The short motif at 293-301 (ILPPVPVPK) is the Box 1 motif element. Residues 336 to 345 (DSWVEFIELD) carry the UbE motif motif. Phosphoserine is present on Ser337. The disordered stretch occupies residues 451–471 (KPRPLPIGGTESTHQAVHTQL). Positions 460 to 471 (TESTHQAVHTQL) are enriched in polar residues. Phosphotyrosine is present on residues Tyr483 and Tyr591.

Belongs to the type I cytokine receptor family. Type 1 subfamily. In terms of assembly, on growth hormone (GH) binding, forms homodimers and binds JAK2 via a box 1-containing domain. In terms of processing, the soluble form (GHBP) is produced by phorbol ester-promoted proteolytic cleavage at the cell surface (shedding) by ADAM17/TACE. Shedding is inhibited by growth hormone (GH) binding to the receptor probably due to a conformational change in GHR rendering the receptor inaccessible to ADAM17. On GH binding, phosphorylated on tyrosine residues in the cytoplasmic domain by JAK2. Post-translationally, ubiquitinated by the ECS(SOCS2) complex following ligand-binding and phosphorylation by JAK2, leading to its degradation by the proteasome. Regulation by the ECS(SOCS2) complex acts as a negative feedback loop of growth hormone receptor signaling. Ubiquitination is not sufficient for GHR internalization.

It is found in the cell membrane. The protein resides in the secreted. Functionally, receptor for pituitary gland growth hormone (GH1) involved in regulating postnatal body growth. On ligand binding, couples to the JAK2/STAT5 pathway. The soluble form (GHBP) acts as a reservoir of growth hormone in plasma and may be a modulator/inhibitor of GH signaling. The chain is Growth hormone receptor (GHR) from Ovis aries (Sheep).